The following is a 1005-amino-acid chain: Beta/gamma crystallin domain-containing protein 3 (1005 aa).

Phosphoserine occurs at positions 122, 129, 130, 136, and 140. Disordered stretches follow at residues 132-159 (EDVL…PSSV) and 173-198 (NFDG…DWRT). Positions 180-189 (QEAEEEEEEA) are enriched in acidic residues. Beta/gamma crystallin 'Greek key' domains follow at residues 367 to 416 (GCWI…KRVL), 462 to 500 (GVWL…HPLQ), 512 to 556 (LKVI…RVIG), 557 to 599 (GVWV…RYLQ), 605 to 647 (SSIT…HVKS), 648 to 690 (GVWV…RPIQ), 701 to 737 (HLLK…KVLR), 738 to 781 (GCWL…QPID), and 828 to 869 (GLWI…RPMK). A Ricin B-type lectin domain is found at 871-1003 (PAVYIRIRNR…GEETQKWDIE (133 aa)).

It belongs to the beta/gamma-crystallin family.

The polypeptide is Beta/gamma crystallin domain-containing protein 3 (Crybg3) (Mus musculus (Mouse)).